Here is a 247-residue protein sequence, read N- to C-terminus: E3 SUMO-protein ligase NSE2 (247 aa).

Met1 is modified (N-acetylmethionine). Glycyl lysine isopeptide (Lys-Gly) (interchain with G-Cter in SUMO2) cross-links involve residues Lys90 and Lys107. Ser116 bears the Phosphoserine mark. Glycyl lysine isopeptide (Lys-Gly) (interchain with G-Cter in SUMO2) cross-links involve residues Lys125 and Lys130. The SP-RING-type zinc finger occupies 154–240 (VDEDIIVTQS…LRRAIENHNK (87 aa)). Zn(2+) contacts are provided by Cys185, His187, Cys210, and Cys215.

It belongs to the NSE2 family. In terms of assembly, component of the SMC5-SMC6 complex which consists at least of SMC5, SMC6, NSMCE2, NSMCE1, NSMCE4A or EID3 and NSMCE3. In terms of processing, sumoylated, possibly via autosumoylation.

It localises to the nucleus. It is found in the chromosome. The protein resides in the telomere. Its subcellular location is the PML body. It participates in protein modification; protein sumoylation. Its function is as follows. E3 SUMO-protein ligase component of the SMC5-SMC6 complex, a complex involved in DNA double-strand break repair by homologous recombination. Is not be required for the stability of the complex. The complex may promote sister chromatid homologous recombination by recruiting the SMC1-SMC3 cohesin complex to double-strand breaks. The complex is required for telomere maintenance via recombination in ALT (alternative lengthening of telomeres) cell lines and mediates sumoylation of shelterin complex (telosome) components which is proposed to lead to shelterin complex disassembly in ALT-associated PML bodies (APBs). Acts as an E3 ligase mediating SUMO attachment to various proteins such as SMC6L1 and TSNAX, the shelterin complex subunits TERF1, TERF2, TINF2 and TERF2IP, RAD51AP1, and maybe the cohesin components RAD21 and STAG2. Required for recruitment of telomeres to PML nuclear bodies. SUMO protein-ligase activity is required for the prevention of DNA damage-induced apoptosis by facilitating DNA repair, and for formation of APBs in ALT cell lines. Required for sister chromatid cohesion during prometaphase and mitotic progression. The chain is E3 SUMO-protein ligase NSE2 (NSMCE2) from Homo sapiens (Human).